A 208-amino-acid chain; its full sequence is Large ribosomal subunit protein uL4 (208 aa).

The tract at residues 45–89 (RQGTHAHKNRSAVSGGGKKPWRQKGTGRARQGSTRSPQWRGGGTV) is disordered.

This sequence belongs to the universal ribosomal protein uL4 family. Part of the 50S ribosomal subunit.

In terms of biological role, one of the primary rRNA binding proteins, this protein initially binds near the 5'-end of the 23S rRNA. It is important during the early stages of 50S assembly. It makes multiple contacts with different domains of the 23S rRNA in the assembled 50S subunit and ribosome. Forms part of the polypeptide exit tunnel. This chain is Large ribosomal subunit protein uL4, found in Lactococcus lactis subsp. lactis (strain IL1403) (Streptococcus lactis).